The chain runs to 101 residues: Helix-loop-helix protein 17 (101 aa).

The interval 14 to 27 is basic motif; that stretch reads GVRLSINLRERCRM. Residues 14 to 68 enclose the bHLH domain; the sequence is GVRLSINLRERCRMHDLNEALDDLRAVIPYAHGGSVRKLSKIATLLLAKNHIIMQ. The segment at 28 to 68 is helix-loop-helix motif; it reads HDLNEALDDLRAVIPYAHGGSVRKLSKIATLLLAKNHIIMQ.

Expressed in neuronal tissues of the head, including sheath cells of the cephalic sensilla (CEPsh) glia.

Its subcellular location is the nucleus. Probable transcription factor that regulates the expression of dopamine receptors dop-1, dop-2 and dop-3 and thus dopamine-dependent behaviors. May act redundantly with hlh-31 and hlh-32 to regulate ventral CEPsh glia functions. May play a role in chemotactic responses in larvae. This chain is Helix-loop-helix protein 17, found in Caenorhabditis elegans.